A 690-amino-acid polypeptide reads, in one-letter code: Elongation factor G (690 aa).

One can recognise a tr-type G domain in the interval 8-282; it reads ERVRNIGIAA…AVIDYLPAPV (275 aa). GTP is bound by residues 17–24, 81–85, and 135–138; these read AHIDAGKT, DTPGH, and NKMD.

Belongs to the TRAFAC class translation factor GTPase superfamily. Classic translation factor GTPase family. EF-G/EF-2 subfamily.

The protein localises to the cytoplasm. Catalyzes the GTP-dependent ribosomal translocation step during translation elongation. During this step, the ribosome changes from the pre-translocational (PRE) to the post-translocational (POST) state as the newly formed A-site-bound peptidyl-tRNA and P-site-bound deacylated tRNA move to the P and E sites, respectively. Catalyzes the coordinated movement of the two tRNA molecules, the mRNA and conformational changes in the ribosome. This Parasynechococcus marenigrum (strain WH8102) protein is Elongation factor G.